Here is a 432-residue protein sequence, read N- to C-terminus: Lysosomal acid phosphatase (432 aa).

Positions 1-32 (MADGSCLGSGPQLGLIALLVVLLFSAVPLAQS) are cleaved as a signal peptide. Residues 33–384 (RELRFVTLVY…TTSFIMTEET (352 aa)) are Lumenal-facing. His-44 acts as the Nucleophile in catalysis. N-linked (GlcNAc...) asparagine glycosylation is found at Asn-94, Asn-135, Asn-179, Asn-193, and Asn-269. Intrachain disulfides connect Cys-161–Cys-373, Cys-214–Cys-313, and Cys-348–Cys-352. Asp-290 (proton donor) is an active-site residue. Asn-325 and Asn-334 each carry an N-linked (GlcNAc...) asparagine glycan. Residues 385–405 (IIGLTIGAIALFIIIVVLMLL) form a helical membrane-spanning segment. Residues 406-432 (SCNEPKDDGYQHVSDEGDDHETKGLAM) lie on the Cytoplasmic side of the membrane.

Belongs to the histidine acid phosphatase family. The membrane-bound form is converted to the soluble form by sequential proteolytic processing. First, the C-terminal cytoplasmic tail is removed. Cleavage by a lysosomal protease releases the soluble form in the lysosome lumen.

The protein localises to the lysosome membrane. It is found in the lysosome lumen. The enzyme catalyses a phosphate monoester + H2O = an alcohol + phosphate. This Xenopus laevis (African clawed frog) protein is Lysosomal acid phosphatase (acp2).